The following is a 1006-amino-acid chain: Zinc finger protein ZFPM1 (1006 aa).

A compositionally biased stretch (basic residues) spans 1–13 (MSRRKQSNPRQIK). Disordered stretches follow at residues 1 to 93 (MSRR…DELE) and 114 to 133 (SWGPFHGSVQTRASSPRQAE). Residues 15-25 (SLGDMEAREEV) show a composition bias toward basic and acidic residues. Positions 42–62 (APSPPSADVNSPPPLPPPTSP) are enriched in pro residues. The span at 66–79 (KELEGQEPEPRPTE) shows a compositional bias: basic and acidic residues. Phosphoserine is present on residues Ser-84 and Ser-128. Residues 121–130 (SVQTRASSPR) are compositionally biased toward polar residues. The segment at 235–268 (VINKDVFPCKDCGIWYRSERNLQAHLLYYCASRQ) adopts a CCHC FOG-type 1 zinc-finger fold. Residues Cys-243, Cys-246, His-259, and Cys-264 each coordinate Zn(2+). The residue at position 272 (Ser-272) is a Phosphoserine. C2H2-type zinc fingers lie at residues 290-314 (RVCPFPQCRKSCPSASSLEIHMRSH), 320-342 (FVCLICLSAFTTKANCERHLKVH), and 348-371 (GVCHSCGFISTTRDILYSHLVTNH). The tract at residues 330–341 (TTKANCERHLKV) is interaction with TACC3. Phosphoserine is present on Ser-384. Disordered regions lie at residues 384–409 (SPGAGHPATKLPPDSLGSFQQQHTAL), 438–460 (NGEARAEPLAQNGGSSEPPAAPR), and 473–515 (APIL…SPVP). A compositionally biased stretch (low complexity) spans 485–515 (APSRTPSPRSPAPARVKAELSSPTPGSSPVP). Phosphoserine is present on residues Ser-491 and Ser-494. The segment at 571-604 (PGAPKGATCFECEITFSNVNNYYVHKRLYCSGRR) adopts a CCHC FOG-type 2 zinc-finger fold. Residues Cys-579, Cys-582, His-595, and Cys-600 each coordinate Zn(2+). The segment at 605-681 (APEDAPAARR…SVDDAEDDPS (77 aa)) is disordered. Residues 617 to 629 (APPGPARAPPGQP) are compositionally biased toward pro residues. A phosphoserine mark is found at Ser-638 and Ser-671. The segment at 677-710 (EDDPSRTLCEACNIRFSRHETYTVHKRYYCASRH) adopts a CCHC FOG-type 3 zinc-finger fold. Cys-685, Cys-688, His-701, and Cys-706 together coordinate Zn(2+). Residues 708 to 810 (SRHDPPPRRP…PRRPLPGAPA (103 aa)) are disordered. 2 stretches are compositionally biased toward pro residues: residues 715–735 (RRPAAPPGPPGPAAPPAPSPA) and 754–769 (APPPPPPGHAPAPESP). A compositionally biased stretch (low complexity) spans 780–791 (GLAPARSPGPAA). The residue at position 786 (Ser-786) is a Phosphoserine. Residues 794–800 (PIDLSKK) form an interaction with CTBP2 region. The CCHC FOG-type 4 zinc-finger motif lies at 811–844 (PALADYHECTACRVSFHSLEAYLAHKKYSCPAAP). Zn(2+)-binding residues include Cys-819, Cys-822, His-835, and Cys-840. Residues 854–877 (AACPYCPPNGPVRGDLLEHFRLAH) form a C2H2-type 4 zinc finger. Residues 889–971 (GVEARTPADR…KGTPAPLPNG (83 aa)) are disordered. 4 positions are modified to phosphoserine: Ser-901, Ser-909, Ser-914, and Ser-935. Pro residues predominate over residues 925–950 (PQEPPPGPPPSPAAAPEAVPPPPAPP). Residues 968-1001 (LPNGNHRYCRLCNIKFSSLSTFIAHKKYYCSSHA) form a CCHC FOG-type 5 zinc finger. Zn(2+)-binding residues include Cys-976, Cys-979, His-992, and Cys-997.

This sequence belongs to the FOG (Friend of GATA) family. In terms of assembly, interacts with corepressor CTBP2; this interaction is however not essential for corepressor activity. Interacts with the N-terminal zinc-finger of GATA1, GATA2 and probably GATA3. In terms of tissue distribution, mainly expressed in hematopoietic tissues. Also expressed in adult cerebellum, stomach, lymph node, liver and pancreas. Expressed in fetal heart, liver and spleen.

Its subcellular location is the nucleus. Functionally, transcription regulator that plays an essential role in erythroid and megakaryocytic cell differentiation. Essential cofactor that acts via the formation of a heterodimer with transcription factors of the GATA family GATA1, GATA2 and GATA3. Such heterodimer can both activate or repress transcriptional activity, depending on the cell and promoter context. The heterodimer formed with GATA proteins is essential to activate expression of genes such as NFE2, ITGA2B, alpha- and beta-globin, while it represses expression of KLF1. May be involved in regulation of some genes in gonads. May also be involved in cardiac development, in a non-redundant way with ZFPM2/FOG2. The protein is Zinc finger protein ZFPM1 (ZFPM1) of Homo sapiens (Human).